The primary structure comprises 102 residues: UPF0147 protein MTH_1407 (102 aa).

The protein belongs to the UPF0147 family.

This Methanothermobacter thermautotrophicus (strain ATCC 29096 / DSM 1053 / JCM 10044 / NBRC 100330 / Delta H) (Methanobacterium thermoautotrophicum) protein is UPF0147 protein MTH_1407.